The following is a 118-amino-acid chain: Putative pterin-4-alpha-carbinolamine dehydratase (118 aa).

It belongs to the pterin-4-alpha-carbinolamine dehydratase family.

The enzyme catalyses (4aS,6R)-4a-hydroxy-L-erythro-5,6,7,8-tetrahydrobiopterin = (6R)-L-erythro-6,7-dihydrobiopterin + H2O. This is Putative pterin-4-alpha-carbinolamine dehydratase from Pseudomonas savastanoi pv. phaseolicola (strain 1448A / Race 6) (Pseudomonas syringae pv. phaseolicola (strain 1448A / Race 6)).